A 257-amino-acid polypeptide reads, in one-letter code: NAD-capped RNA hydrolase NudC (257 aa).

R69 lines the substrate pocket. Residues C98 and C101 each coordinate Zn(2+). Substrate is bound at residue E111. Zn(2+) is bound by residues C116 and C119. Position 124 (Y124) interacts with substrate. One can recognise a Nudix hydrolase domain in the interval 125 to 248; that stretch reads PQIAPCIIVA…TVARRLIEDT (124 aa). A158, E174, and E178 together coordinate a divalent metal cation. The Nudix box signature appears at 159-180; that stretch reads GFVEVGETLEQAVAREVMEESG. 192-199 lines the substrate pocket; the sequence is QPWPFPQS. An a divalent metal cation-binding site is contributed by E219. A241 contributes to the substrate binding site.

It belongs to the Nudix hydrolase family. NudC subfamily. As to quaternary structure, homodimer. The cofactor is Mg(2+). It depends on Mn(2+) as a cofactor. Zn(2+) is required as a cofactor.

It catalyses the reaction a 5'-end NAD(+)-phospho-ribonucleoside in mRNA + H2O = a 5'-end phospho-adenosine-phospho-ribonucleoside in mRNA + beta-nicotinamide D-ribonucleotide + 2 H(+). The catalysed reaction is NAD(+) + H2O = beta-nicotinamide D-ribonucleotide + AMP + 2 H(+). It carries out the reaction NADH + H2O = reduced beta-nicotinamide D-ribonucleotide + AMP + 2 H(+). Functionally, mRNA decapping enzyme that specifically removes the nicotinamide adenine dinucleotide (NAD) cap from a subset of mRNAs by hydrolyzing the diphosphate linkage to produce nicotinamide mononucleotide (NMN) and 5' monophosphate mRNA. The NAD-cap is present at the 5'-end of some mRNAs and stabilizes RNA against 5'-processing. Has preference for mRNAs with a 5'-end purine. Catalyzes the hydrolysis of a broad range of dinucleotide pyrophosphates. This Salmonella choleraesuis (strain SC-B67) protein is NAD-capped RNA hydrolase NudC.